The sequence spans 426 residues: Serine--tRNA ligase (426 aa).

The segment covering methionine 1–arginine 15 has biased composition (basic and acidic residues). The disordered stretch occupies residues methionine 1 to glycine 22. Residue threonine 228–glutamate 230 participates in L-serine binding. ATP-binding positions include arginine 259 to glutamate 261 and valine 275. Glutamate 282 is an L-serine binding site. Glutamate 346–serine 349 is an ATP binding site. Threonine 386 provides a ligand contact to L-serine.

Belongs to the class-II aminoacyl-tRNA synthetase family. Type-1 seryl-tRNA synthetase subfamily. As to quaternary structure, homodimer. The tRNA molecule binds across the dimer.

The protein resides in the cytoplasm. It carries out the reaction tRNA(Ser) + L-serine + ATP = L-seryl-tRNA(Ser) + AMP + diphosphate + H(+). The enzyme catalyses tRNA(Sec) + L-serine + ATP = L-seryl-tRNA(Sec) + AMP + diphosphate + H(+). It participates in aminoacyl-tRNA biosynthesis; selenocysteinyl-tRNA(Sec) biosynthesis; L-seryl-tRNA(Sec) from L-serine and tRNA(Sec): step 1/1. In terms of biological role, catalyzes the attachment of serine to tRNA(Ser). Is also able to aminoacylate tRNA(Sec) with serine, to form the misacylated tRNA L-seryl-tRNA(Sec), which will be further converted into selenocysteinyl-tRNA(Sec). The sequence is that of Serine--tRNA ligase from Pseudarthrobacter chlorophenolicus (strain ATCC 700700 / DSM 12829 / CIP 107037 / JCM 12360 / KCTC 9906 / NCIMB 13794 / A6) (Arthrobacter chlorophenolicus).